We begin with the raw amino-acid sequence, 97 residues long: MALSLEEVRRIAVLARLRLSEEEERTFAGQLSAILDHVRQLEELDVTAVEPMTHALAAGELPARREDAVFPSLTPEEATAAAPAREGTAFKVPRIIE.

The protein belongs to the GatC family. In terms of assembly, heterotrimer of A, B and C subunits.

It catalyses the reaction L-glutamyl-tRNA(Gln) + L-glutamine + ATP + H2O = L-glutaminyl-tRNA(Gln) + L-glutamate + ADP + phosphate + H(+). The enzyme catalyses L-aspartyl-tRNA(Asn) + L-glutamine + ATP + H2O = L-asparaginyl-tRNA(Asn) + L-glutamate + ADP + phosphate + 2 H(+). Functionally, allows the formation of correctly charged Asn-tRNA(Asn) or Gln-tRNA(Gln) through the transamidation of misacylated Asp-tRNA(Asn) or Glu-tRNA(Gln) in organisms which lack either or both of asparaginyl-tRNA or glutaminyl-tRNA synthetases. The reaction takes place in the presence of glutamine and ATP through an activated phospho-Asp-tRNA(Asn) or phospho-Glu-tRNA(Gln). The sequence is that of Aspartyl/glutamyl-tRNA(Asn/Gln) amidotransferase subunit C from Anaeromyxobacter sp. (strain K).